Here is a 447-residue protein sequence, read N- to C-terminus: Tubulin beta chain (447 aa).

Glutamine 11, glutamate 69, serine 138, glycine 142, threonine 143, glycine 144, asparagine 204, and asparagine 226 together coordinate GTP. Glutamate 69 provides a ligand contact to Mg(2+). The disordered stretch occupies residues 424-447; sequence QYQEASVSEGEEEYDEEAPLEAEE. A compositionally biased stretch (acidic residues) spans 432-447; that stretch reads EGEEEYDEEAPLEAEE.

This sequence belongs to the tubulin family. Dimer of alpha and beta chains. A typical microtubule is a hollow water-filled tube with an outer diameter of 25 nm and an inner diameter of 15 nM. Alpha-beta heterodimers associate head-to-tail to form protofilaments running lengthwise along the microtubule wall with the beta-tubulin subunit facing the microtubule plus end conferring a structural polarity. Microtubules usually have 13 protofilaments but different protofilament numbers can be found in some organisms and specialized cells. Mg(2+) serves as cofactor.

The protein localises to the cytoplasm. The protein resides in the cytoskeleton. In terms of biological role, tubulin is the major constituent of microtubules, a cylinder consisting of laterally associated linear protofilaments composed of alpha- and beta-tubulin heterodimers. Microtubules grow by the addition of GTP-tubulin dimers to the microtubule end, where a stabilizing cap forms. Below the cap, tubulin dimers are in GDP-bound state, owing to GTPase activity of alpha-tubulin. The chain is Tubulin beta chain (TUB1) from Cochliobolus heterostrophus (Southern corn leaf blight fungus).